The sequence spans 481 residues: Glutamate--tRNA ligase 2 (481 aa).

Positions 17–27 (PSPTGFLHIGG) match the 'HIGH' region motif. The segment covering 118–139 (AEQRAKKQPQRYDGRWRDRDPS) has biased composition (basic and acidic residues). Positions 118–143 (AEQRAKKQPQRYDGRWRDRDPSEAPA) are disordered. Residues 246–250 (KLSKR) carry the 'KMSKS' region motif. Position 249 (K249) interacts with ATP.

Belongs to the class-I aminoacyl-tRNA synthetase family. Glutamate--tRNA ligase type 1 subfamily. As to quaternary structure, monomer.

The protein localises to the cytoplasm. It carries out the reaction tRNA(Glu) + L-glutamate + ATP = L-glutamyl-tRNA(Glu) + AMP + diphosphate. Catalyzes the attachment of glutamate to tRNA(Glu) in a two-step reaction: glutamate is first activated by ATP to form Glu-AMP and then transferred to the acceptor end of tRNA(Glu). The sequence is that of Glutamate--tRNA ligase 2 from Zymomonas mobilis subsp. mobilis (strain ATCC 31821 / ZM4 / CP4).